Reading from the N-terminus, the 310-residue chain is S-methyl-5'-thioadenosine phosphorylase (310 aa).

Phosphate contacts are provided by residues Thr-20, 62–63 (RH), and 95–96 (SA). Substrate is bound at residue Met-197. Ser-198 serves as a coordination point for phosphate. 221 to 223 (DYD) is a binding site for substrate.

The protein belongs to the PNP/MTAP phosphorylase family. MTAP subfamily. As to quaternary structure, homotrimer.

Its subcellular location is the cytoplasm. The protein localises to the nucleus. The enzyme catalyses S-methyl-5'-thioadenosine + phosphate = 5-(methylsulfanyl)-alpha-D-ribose 1-phosphate + adenine. It functions in the pathway amino-acid biosynthesis; L-methionine biosynthesis via salvage pathway; S-methyl-5-thio-alpha-D-ribose 1-phosphate from S-methyl-5'-thioadenosine (phosphorylase route): step 1/1. Catalyzes the reversible phosphorylation of S-methyl-5'-thioadenosine (MTA) to adenine and 5-methylthioribose-1-phosphate. Involved in the breakdown of MTA, a major by-product of polyamine biosynthesis. Responsible for the first step in the methionine salvage pathway after MTA has been generated from S-adenosylmethionine. Has broad substrate specificity with 6-aminopurine nucleosides as preferred substrates. This chain is S-methyl-5'-thioadenosine phosphorylase, found in Neurospora crassa (strain ATCC 24698 / 74-OR23-1A / CBS 708.71 / DSM 1257 / FGSC 987).